The primary structure comprises 245 residues: Probable phosphatase YcdX (245 aa).

Zn(2+) contacts are provided by H7, H9, H15, H40, E73, H101, H131, D192, and H194.

Belongs to the PHP family. In terms of assembly, homotrimer. It depends on Zn(2+) as a cofactor.

The sequence is that of Probable phosphatase YcdX from Salmonella agona (strain SL483).